The following is a 439-amino-acid chain: NAD-dependent malic enzyme 1 (439 aa).

Positions 9-84 constitute an ACT domain; that stretch reads TLMIETPSVP…GIRLHTVSDE (76 aa). The active-site Proton donor is the Y112. Catalysis depends on K167, which acts as the Proton acceptor. The a divalent metal cation site is built by E209, D210, and D235. NAD(+)-binding positions include 268 to 271, N347, and N373; that span reads LGAA.

The protein belongs to the malic enzymes family. Mg(2+) is required as a cofactor. It depends on Mn(2+) as a cofactor.

It catalyses the reaction (S)-malate + NAD(+) = pyruvate + CO2 + NADH. It carries out the reaction oxaloacetate + H(+) = pyruvate + CO2. Functionally, catalyzes the decarboxylation of malate to pyruvate. Is specific for NAD, cannot use NADP. Can also catalyze the decarboxylation of oxaloacetate. Involved in keeping the ATP levels high. This is NAD-dependent malic enzyme 1 from Bacillus subtilis (strain 168).